A 2772-amino-acid chain; its full sequence is Protein DDB_G0276689 (2772 aa).

Disordered stretches follow at residues 50–82 (QQLK…NNNN), 371–415 (NLET…NGKS), 475–514 (LDIN…KNNL), 612–650 (NKNN…NNNE), 685–708 (LRGS…DSSL), and 933–982 (LVNN…NNSN). Low complexity-rich tracts occupy residues 376-412 (NNNN…NNNN), 478-514 (NSKN…KNNL), 614-649 (NNNN…NNNN), and 688-708 (SFSP…DSSL). An LRR 1 repeat occupies 1065-1089 (LSKWILNLDDNNYNHIPFMSLVLMP). The segment at 1282-1319 (NNNNIDNNNNNNNNNNNNNNNNNNNNNNNNNNNNNNNN) is disordered. LRR repeat units lie at residues 1393–1416 (LSNL…TPKN) and 1543–1567 (HKDV…SFSN). Residues 1587-1619 (QNNNYNNNNYNNNYNNNNNNNNNNNNNNNNNNN) are compositionally biased toward low complexity. Positions 1587 to 1622 (QNNNYNNNNYNNNYNNNNNNNNNNNNNNNNNNNIDN) are disordered. An LRR 4 repeat occupies 1899–1922 (LEELTKQEIGYQVLLVLPTDLQVE). Polar residues-rich tracts occupy residues 1999–2011 (YVSN…NDQI) and 2073–2083 (LNIVHSTSPNS). 3 disordered regions span residues 1999–2021 (YVSN…KDKK), 2054–2083 (EISN…SPNS), and 2367–2386 (NNSS…NNNN). Residues 2414-2439 (TTIINNIEMDKNRLDEAIYYLKKYGN) form an LRR 5 repeat.

In Dictyostelium discoideum (Social amoeba), this protein is Protein DDB_G0276689.